The sequence spans 191 residues: Protein GrpE (191 aa).

The disordered stretch occupies residues 1-49 (MSEEKQTAEQVEAAEQEEVTEQAEQAASQEQHEETAGQEEALQHQIDEL). Over residues 12-21 (EAAEQEEVTE) the composition is skewed to acidic residues. Residues 30 to 49 (EQHEETAGQEEALQHQIDEL) are compositionally biased toward basic and acidic residues.

The protein belongs to the GrpE family. Homodimer.

Its subcellular location is the cytoplasm. Participates actively in the response to hyperosmotic and heat shock by preventing the aggregation of stress-denatured proteins, in association with DnaK and GrpE. It is the nucleotide exchange factor for DnaK and may function as a thermosensor. Unfolded proteins bind initially to DnaJ; upon interaction with the DnaJ-bound protein, DnaK hydrolyzes its bound ATP, resulting in the formation of a stable complex. GrpE releases ADP from DnaK; ATP binding to DnaK triggers the release of the substrate protein, thus completing the reaction cycle. Several rounds of ATP-dependent interactions between DnaJ, DnaK and GrpE are required for fully efficient folding. This Bacillus velezensis (strain DSM 23117 / BGSC 10A6 / LMG 26770 / FZB42) (Bacillus amyloliquefaciens subsp. plantarum) protein is Protein GrpE.